Reading from the N-terminus, the 776-residue chain is Lon protease (776 aa).

The 198-residue stretch at 12–209 (LPIIALRGLW…LVYKFVIKEI (198 aa)) folds into the Lon N-terminal domain. 360–367 (GPPGVGKT) is a binding site for ATP. Residues 596–776 (EDTVGVVNGL…VKEILDEVLI (181 aa)) form the Lon proteolytic domain. Active-site residues include Ser-683 and Lys-726.

Belongs to the peptidase S16 family. As to quaternary structure, homohexamer. Organized in a ring with a central cavity.

It is found in the cytoplasm. The catalysed reaction is Hydrolysis of proteins in presence of ATP.. Functionally, ATP-dependent serine protease that mediates the selective degradation of mutant and abnormal proteins as well as certain short-lived regulatory proteins. Required for cellular homeostasis and for survival from DNA damage and developmental changes induced by stress. Degrades polypeptides processively to yield small peptide fragments that are 5 to 10 amino acids long. Binds to DNA in a double-stranded, site-specific manner. The chain is Lon protease from Finegoldia magna (strain ATCC 29328 / DSM 20472 / WAL 2508) (Peptostreptococcus magnus).